The following is a 123-amino-acid chain: Protein Rev (123 aa).

Phosphoserine; by host CK2 is present on Ser-5. Residues Ile-18 to Ser-26 form a homomultimerization region. The tract at residues Ser-25–Arg-50 is disordered. The short motif at Ser-34–Arg-50 is the Nuclear localization signal and RNA-binding (RRE) element. The span at Arg-35–Gln-49 shows a compositional bias: basic residues. The Nuclear export signal and binding to XPO1 motif lies at Leu-73 to Asp-84. The interval Ser-86 to Asn-123 is disordered. Over residues Ser-88–Glu-101 the composition is skewed to polar residues. Residue Ser-92 is modified to Phosphoserine; by host.

Belongs to the HIV-1 REV protein family. As to quaternary structure, homomultimer; when bound to the RRE. Multimeric assembly is essential for activity and may involve XPO1. Binds to human KPNB1, XPO1, TNPO1, RANBP5 and IPO7. Interacts with the viral Integrase. Interacts with human KHDRBS1. Interacts with human NAP1; this interaction decreases Rev multimerization and stimulates its activity. Interacts with human DEAD-box helicases DDX3 and DDX24; these interactions may serve for viral RNA export to the cytoplasm and packaging, respectively. Interacts with human PSIP1; this interaction may inhibit HIV-1 DNA integration by promoting dissociation of the Integrase-LEDGF/p75 complex. Asymmetrically arginine dimethylated at one site by host PRMT6. Methylation impairs the RNA-binding activity and export of viral RNA from the nucleus to the cytoplasm. Post-translationally, phosphorylated by protein kinase CK2. Presence of, and maybe binding to the N-terminus of the regulatory beta subunit of CK2 is necessary for CK2-mediated Rev's phosphorylation.

The protein resides in the host nucleus. It localises to the host nucleolus. The protein localises to the host cytoplasm. In terms of biological role, escorts unspliced or incompletely spliced viral pre-mRNAs (late transcripts) out of the nucleus of infected cells. These pre-mRNAs carry a recognition sequence called Rev responsive element (RRE) located in the env gene, that is not present in fully spliced viral mRNAs (early transcripts). This function is essential since most viral proteins are translated from unspliced or partially spliced pre-mRNAs which cannot exit the nucleus by the pathway used by fully processed cellular mRNAs. Rev itself is translated from a fully spliced mRNA that readily exits the nucleus. Rev's nuclear localization signal (NLS) binds directly to KPNB1/Importin beta-1 without previous binding to KPNA1/Importin alpha-1. KPNB1 binds to the GDP bound form of RAN (Ran-GDP) and targets Rev to the nucleus. In the nucleus, the conversion from Ran-GDP to Ran-GTP dissociates Rev from KPNB1 and allows Rev's binding to the RRE in viral pre-mRNAs. Rev multimerization on the RRE via cooperative assembly exposes its nuclear export signal (NES) to the surface. Rev can then form a complex with XPO1/CRM1 and Ran-GTP, leading to nuclear export of the complex. Conversion from Ran-GTP to Ran-GDP mediates dissociation of the Rev/RRE/XPO1/RAN complex, so that Rev can return to the nucleus for a subsequent round of export. Beside KPNB1, also seems to interact with TNPO1/Transportin-1, RANBP5/IPO5 and IPO7/RANBP7 for nuclear import. The nucleoporin-like HRB/RIP is an essential cofactor that probably indirectly interacts with Rev to release HIV RNAs from the perinuclear region to the cytoplasm. In Human immunodeficiency virus type 1 group M subtype A (isolate U455) (HIV-1), this protein is Protein Rev.